A 301-amino-acid chain; its full sequence is Acetyl-coenzyme A carboxylase carboxyl transferase subunit beta (301 aa).

Positions 25–294 constitute a CoA carboxyltransferase N-terminal domain; sequence LWIKCPETGE…SAANDMNSGA (270 aa).

Belongs to the AccD/PCCB family. As to quaternary structure, acetyl-CoA carboxylase is a heterohexamer composed of biotin carboxyl carrier protein (AccB), biotin carboxylase (AccC) and two subunits each of ACCase subunit alpha (AccA) and ACCase subunit beta (AccD).

The protein localises to the cytoplasm. The catalysed reaction is N(6)-carboxybiotinyl-L-lysyl-[protein] + acetyl-CoA = N(6)-biotinyl-L-lysyl-[protein] + malonyl-CoA. The protein operates within lipid metabolism; malonyl-CoA biosynthesis; malonyl-CoA from acetyl-CoA: step 1/1. Component of the acetyl coenzyme A carboxylase (ACC) complex. Biotin carboxylase (BC) catalyzes the carboxylation of biotin on its carrier protein (BCCP) and then the CO(2) group is transferred by the transcarboxylase to acetyl-CoA to form malonyl-CoA. This Rhizobium leguminosarum bv. trifolii (strain WSM1325) protein is Acetyl-coenzyme A carboxylase carboxyl transferase subunit beta.